The chain runs to 157 residues: S-ribosylhomocysteine lyase 2 (157 aa).

The Fe cation site is built by histidine 54, histidine 58, and cysteine 124.

This sequence belongs to the LuxS family. As to quaternary structure, homodimer. The cofactor is Fe cation.

The catalysed reaction is S-(5-deoxy-D-ribos-5-yl)-L-homocysteine = (S)-4,5-dihydroxypentane-2,3-dione + L-homocysteine. Involved in the synthesis of autoinducer 2 (AI-2) which is secreted by bacteria and is used to communicate both the cell density and the metabolic potential of the environment. The regulation of gene expression in response to changes in cell density is called quorum sensing. Catalyzes the transformation of S-ribosylhomocysteine (RHC) to homocysteine (HC) and 4,5-dihydroxy-2,3-pentadione (DPD). This is S-ribosylhomocysteine lyase 2 from Lactobacillus delbrueckii subsp. bulgaricus (strain ATCC BAA-365 / Lb-18).